Consider the following 280-residue polypeptide: MGHSGENVLCVALLAIYLAAGGAAKPVMPERRGYAPPFTAAPSTLGTVDVTACGGITLPTKVDFRGSGGVQVIVRWFFGAPIDDNTTDLCWVPLHSYQADGCHFPADDDFNISTCCAHGTLFVSPDSDYSSYLTGNGDLRVYPGTMDAGIYAFYVRIGDDHFVGAWDLRVKHSKYCHGDYGMKVQVQSLPESSEERVVATDSDSGSCEDDEKEEKSDCEFPEIAVPQTWSKVCTATWGEHGSRLFVWPACLGTHQESIEGAHTAMPVLYYGSKPIASEQK.

The N-terminal stretch at 1-24 (MGHSGENVLCVALLAIYLAAGGAA) is a signal peptide. 2 N-linked (GlcNAc...) asparagine; by host glycosylation sites follow: Asn-85 and Asn-111. Positions 191–218 (ESSEERVVATDSDSGSCEDDEKEEKSDC) are disordered.

This sequence belongs to the alphaherpesvirinae glycoprotein G family.

In Psittacid herpesvirus 1 (isolate Amazon parrot/-/97-0001/1997) (PsHV-1), this protein is Glycoprotein G (gG).